The primary structure comprises 608 residues: Microtubule-associated protein 70-3 (608 aa).

Residues 1-23 (MADGVEEGNAVAPRGPARRRGTV) form a disordered region. Positions 40-346 (DPVRVELTRL…ARSEAQLKEK (307 aa)) form a coiled coil. Residues 224–458 (ILDKLQRQKV…HLLNRSTDAV (235 aa)) are required for targeting to microtubules. Disordered stretches follow at residues 354 to 493 (LEDG…TANN) and 570 to 608 (DKEQEVKARRLGSSKGTGSSQVLSGSRSSSRSGLTRNYQ). Over residues 363–379 (SGSSRLPTEGKSFSNGP) the composition is skewed to polar residues. Over residues 402 to 421 (RRSPSFHSRSSLSSSSSLVL) the composition is skewed to low complexity. A compositionally biased stretch (polar residues) spans 476-493 (IENTNSNTDESNKETANN). A coiled-coil region spans residues 542 to 576 (LTKAMEVEAKKMRREVAAMEKEVAAMRVDKEQEVK). Residues 586-608 (TGSSQVLSGSRSSSRSGLTRNYQ) are compositionally biased toward low complexity.

Belongs to the MAP70 family.

The protein localises to the cytoplasm. The protein resides in the cytoskeleton. Its function is as follows. Plant-specific protein that interact with microtubules. The polypeptide is Microtubule-associated protein 70-3 (MAP70.3) (Oryza sativa subsp. japonica (Rice)).